The chain runs to 184 residues: MREYKLVVLGSRGVGKSALTVQFVQGIFVEKYDPTIEDSYREQVEVDAQQCMLEILDTAGTEQFTAMRDLYMKNGQGFALVYSITAQSTFNDLQDLREQILRVKDTDDVPMILVGNKCDLEDERVVGKEQGQNLARQWNNCAFLESSAKSKINVNEIFYDLVRQINRKTPVPGKARKKSSCQLL.

Residue 10–18 (GSRGVGKSA) participates in GTP binding. The Effector region motif lies at 32 to 40 (YDPTIEDSY). GTP contacts are provided by residues 57–61 (DTAGT), 116–119 (NKCD), and 147–149 (SAK). Cysteine 181 carries S-geranylgeranyl cysteine lipidation. A propeptide spans 182–184 (QLL) (removed in mature form).

It belongs to the small GTPase superfamily. Ras family.

The protein localises to the cell membrane. It is found in the cytoplasm. Its subcellular location is the cytosol. It carries out the reaction GTP + H2O = GDP + phosphate + H(+). Its function is as follows. Probable GTP-binding protein with intrinsic GTPase activity. The polypeptide is Ras-related protein Rap-1b-like protein (Homo sapiens (Human)).